The following is a 246-amino-acid chain: 5-oxoprolinase subunit A (246 aa).

This sequence belongs to the LamB/PxpA family. In terms of assembly, forms a complex composed of PxpA, PxpB and PxpC.

It catalyses the reaction 5-oxo-L-proline + ATP + 2 H2O = L-glutamate + ADP + phosphate + H(+). In terms of biological role, catalyzes the cleavage of 5-oxoproline to form L-glutamate coupled to the hydrolysis of ATP to ADP and inorganic phosphate. This chain is 5-oxoprolinase subunit A, found in Cupriavidus pinatubonensis (strain JMP 134 / LMG 1197) (Cupriavidus necator (strain JMP 134)).